A 383-amino-acid chain; its full sequence is Opsin Rh3 (383 aa).

At 1–57 (MESGNVSSSLFGNVSTALRPEARLSAETRLLGWNVPPEELRHIPEHWLTYPEPPESM) the chain is on the extracellular side. N-linked (GlcNAc...) asparagine glycosylation occurs at asparagine 13. The chain crosses the membrane as a helical span at residues 58 to 82 (NYLLGTLYIFFTLMSMLGNGLVIWV). Residues 83–94 (FSAAKSLRTPSN) lie on the Cytoplasmic side of the membrane. Residues 95–119 (ILVINLAFCDFMMMVKTPIFIYNSF) form a helical membrane-spanning segment. The Extracellular portion of the chain corresponds to 120–133 (HQGYALGHLGCQIF). Cysteine 130 and cysteine 207 are oxidised to a cystine. A helical membrane pass occupies residues 134 to 153 (GIIGSYTGIAAGATNAFIAY). Over 154 to 171 (DRFNVITRPMEGKMTHGK) the chain is Cytoplasmic. Residues 172–196 (AIAMIIFIYMYATPWVVACYTETWG) form a helical membrane-spanning segment. Over 197–220 (RFVPEGYLTSCTFDYLTDNFDTRL) the chain is Extracellular. The chain crosses the membrane as a helical span at residues 221–248 (FVACIFFFSFVCPTTMITYYYSQIVGHV). The Cytoplasmic segment spans residues 249–284 (FSHEKALRDQAKKMNVESLRSNVDKNKETAEIRIAK). Residues 285–308 (AAITICFLFFCSWTPYGVMSLIGA) form a helical membrane-spanning segment. Residues 309–316 (FGDKTLLT) are Extracellular-facing. The chain crosses the membrane as a helical span at residues 317-341 (PGATMIPACACKMVACIDPFVYAIS). An N6-(retinylidene)lysine modification is found at lysine 328. The Cytoplasmic portion of the chain corresponds to 342-383 (HPRYRMELQKRCPWLALNEKAPESSAVASTSTTQEPQQTTAA). Positions 362 to 383 (APESSAVASTSTTQEPQQTTAA) are disordered. Positions 369 to 383 (ASTSTTQEPQQTTAA) are enriched in low complexity.

This sequence belongs to the G-protein coupled receptor 1 family. Opsin subfamily. In terms of processing, phosphorylated on some or all of the serine and threonine residues present in the C-terminal region.

The protein resides in the membrane. Visual pigments are the light-absorbing molecules that mediate vision. They consist of an apoprotein, opsin, covalently linked to cis-retinal. This chain is Opsin Rh3 (Rh3), found in Drosophila melanogaster (Fruit fly).